A 707-amino-acid chain; its full sequence is Golgin candidate 1 (707 aa).

The Cytoplasmic portion of the chain corresponds to Met-1–Pro-664. 3 disordered regions span residues Val-22–Pro-106, Val-121–Asp-196, and Gln-234–Thr-256. Over residues Ser-38 to Arg-47 the composition is skewed to low complexity. Residues Val-56–Ser-67 are compositionally biased toward basic and acidic residues. The span at Gly-68–Val-80 shows a compositional bias: polar residues. The span at Ser-83–Ser-95 shows a compositional bias: low complexity. Composition is skewed to basic and acidic residues over residues Asp-139 to Gly-150, Thr-185 to Asp-196, and Leu-245 to Asp-254. 2 coiled-coil regions span residues Arg-287–Lys-424 and Ala-452–Val-608. A helical; Signal-anchor for type II membrane protein transmembrane segment spans residues Ile-665 to Ile-685. The Lumenal portion of the chain corresponds to His-686 to Leu-707.

Its subcellular location is the golgi apparatus membrane. Golgi matrix protein playing a role in tethering of vesicles to Golgi membranes and in maintaining the overall structure of the Golgi apparatus. The chain is Golgin candidate 1 (GC1) from Arabidopsis thaliana (Mouse-ear cress).